We begin with the raw amino-acid sequence, 326 residues long: Methionine import ATP-binding protein MetN (326 aa).

One can recognise an ABC transporter domain in the interval 1-226; the sequence is MVFYTIGPQT…PQQPITRQFV (226 aa). 23–30 provides a ligand contact to ATP; sequence GYSGAGKS.

It belongs to the ABC transporter superfamily. Methionine importer (TC 3.A.1.24) family. The complex is composed of two ATP-binding proteins (MetN), two transmembrane proteins (MetI) and a solute-binding protein (MetQ).

The protein resides in the cell inner membrane. It carries out the reaction L-methionine(out) + ATP + H2O = L-methionine(in) + ADP + phosphate + H(+). It catalyses the reaction D-methionine(out) + ATP + H2O = D-methionine(in) + ADP + phosphate + H(+). In terms of biological role, part of the ABC transporter complex MetNIQ involved in methionine import. Responsible for energy coupling to the transport system. The chain is Methionine import ATP-binding protein MetN from Erwinia pyrifoliae (strain DSM 12162 / Ep1/96).